Consider the following 190-residue polypeptide: Probable oligoribonuclease (190 aa).

Residues 19-181 enclose the Exonuclease domain; the sequence is MVWVDLEMTG…QDIEESIEEL (163 aa). The active site involves Tyr140.

It belongs to the oligoribonuclease family.

Functionally, 3'-to-5' exoribonuclease specific for small oligoribonucleotides. This is Probable oligoribonuclease (rexo2-1) from Dictyostelium discoideum (Social amoeba).